Reading from the N-terminus, the 134-residue chain is MENKKTIYFLCTGNSCRSQMAEAWGKQFLEDKWNVYSAGIEAHGVNPNAIKAMNEVNIDITNQTSDIIDATILNSADLVVTLCSHADAVCPSTPPHVNRVHWGFDDPAGKEWSEFQRVRDEIGEHIKRFSETGE.

Active-site nucleophile residues include Cys11, Cys83, and Cys90. Intrachain disulfides connect Cys11/Cys83 and Cys83/Cys90.

It belongs to the low molecular weight phosphotyrosine protein phosphatase family. Thioredoxin-coupled ArsC subfamily.

It is found in the cytoplasm. It carries out the reaction arsenate + [thioredoxin]-dithiol + H(+) = arsenite + [thioredoxin]-disulfide + H2O. Its function is as follows. Catalyzes the reduction of arsenate [As(V)] to arsenite [As(III)]. This is Arsenate reductase from Bacillus cereus (strain G9842).